The chain runs to 90 residues: MTKASASLQDGFLNLLRRENIPATIYLVNGYQLKGYIRGFDNFTVAVEVDGRVQLVYKHALSTITPARPLPVSVSQIMRAGEGQEVEGEE.

In terms of domain architecture, Sm spans 10 to 70 (DGFLNLLRRE…LSTITPARPL (61 aa)).

Belongs to the Hfq family. As to quaternary structure, homohexamer.

Functionally, RNA chaperone that binds small regulatory RNA (sRNAs) and mRNAs to facilitate mRNA translational regulation in response to envelope stress, environmental stress and changes in metabolite concentrations. Also binds with high specificity to tRNAs. The polypeptide is RNA-binding protein Hfq (Symbiobacterium thermophilum (strain DSM 24528 / JCM 14929 / IAM 14863 / T)).